The primary structure comprises 156 residues: Small ribosomal subunit protein uS7 (156 aa).

This sequence belongs to the universal ribosomal protein uS7 family. In terms of assembly, part of the 30S ribosomal subunit. Contacts proteins S9 and S11.

Functionally, one of the primary rRNA binding proteins, it binds directly to 16S rRNA where it nucleates assembly of the head domain of the 30S subunit. Is located at the subunit interface close to the decoding center, probably blocks exit of the E-site tRNA. This Streptococcus pneumoniae (strain Taiwan19F-14) protein is Small ribosomal subunit protein uS7.